We begin with the raw amino-acid sequence, 177 residues long: Ribosome maturation factor RimM (177 aa).

In terms of domain architecture, PRC barrel spans 101–174 (EGEFHLLDLV…WLLLTPPPGL (74 aa)).

Belongs to the RimM family. As to quaternary structure, binds ribosomal protein uS19.

Its subcellular location is the cytoplasm. In terms of biological role, an accessory protein needed during the final step in the assembly of 30S ribosomal subunit, possibly for assembly of the head region. Essential for efficient processing of 16S rRNA. May be needed both before and after RbfA during the maturation of 16S rRNA. It has affinity for free ribosomal 30S subunits but not for 70S ribosomes. The protein is Ribosome maturation factor RimM of Synechococcus sp. (strain CC9605).